The chain runs to 91 residues: DNA-directed RNA polymerase subunit omega (91 aa).

Belongs to the RNA polymerase subunit omega family. As to quaternary structure, the RNAP catalytic core consists of 2 alpha, 1 beta, 1 beta' and 1 omega subunit. When a sigma factor is associated with the core the holoenzyme is formed, which can initiate transcription.

It catalyses the reaction RNA(n) + a ribonucleoside 5'-triphosphate = RNA(n+1) + diphosphate. Promotes RNA polymerase assembly. Latches the N- and C-terminal regions of the beta' subunit thereby facilitating its interaction with the beta and alpha subunits. The protein is DNA-directed RNA polymerase subunit omega of Pectobacterium atrosepticum (strain SCRI 1043 / ATCC BAA-672) (Erwinia carotovora subsp. atroseptica).